The sequence spans 54 residues: uncharacterized protein (54 aa).

This is an uncharacterized protein from Dictyostelium discoideum (Social amoeba).